The following is a 320-amino-acid chain: Cytochrome f (320 aa).

The signal sequence occupies residues 1 to 35; that stretch reads MQTRNAFSWIKKEITRSISVLLMIYIITRAPISNA. 4 residues coordinate heme: Tyr-36, Cys-56, Cys-59, and His-60. A helical membrane pass occupies residues 286–305; sequence VQGLLLFLASIILAQILLVL.

The protein belongs to the cytochrome f family. In terms of assembly, the 4 large subunits of the cytochrome b6-f complex are cytochrome b6, subunit IV (17 kDa polypeptide, petD), cytochrome f and the Rieske protein, while the 4 small subunits are PetG, PetL, PetM and PetN. The complex functions as a dimer. Heme is required as a cofactor.

The protein resides in the plastid. The protein localises to the chloroplast thylakoid membrane. Component of the cytochrome b6-f complex, which mediates electron transfer between photosystem II (PSII) and photosystem I (PSI), cyclic electron flow around PSI, and state transitions. This Pisum sativum (Garden pea) protein is Cytochrome f (petA).